A 1401-amino-acid chain; its full sequence is DNA polymerase III PolC-type (1401 aa).

Residues 388 to 543 (FVVFDIETTG…EDAKATAEIF (156 aa)) enclose the Exonuclease domain.

The protein belongs to the DNA polymerase type-C family. PolC subfamily.

It is found in the cytoplasm. The catalysed reaction is DNA(n) + a 2'-deoxyribonucleoside 5'-triphosphate = DNA(n+1) + diphosphate. Required for replicative DNA synthesis. This DNA polymerase also exhibits 3' to 5' exonuclease activity. The chain is DNA polymerase III PolC-type from Caldanaerobacter subterraneus subsp. tengcongensis (strain DSM 15242 / JCM 11007 / NBRC 100824 / MB4) (Thermoanaerobacter tengcongensis).